The following is a 383-amino-acid chain: Delta(12)-fatty-acid desaturase FAD2 (383 aa).

The next 2 membrane-spanning stretches (helical) occupy residues 56-76 (VVYD…YFHL) and 84-104 (VAWP…WVIA). Residues 105-109 (HECGH) carry the Histidine box-1 motif. The helical transmembrane segment at 117–137 (LLDDIVGLVLHSCLLVPYFSW) threads the bilayer. Residues 141–145 (HRRHH) carry the Histidine box-2 motif. Helical transmembrane passes span 179 to 199 (LFTL…FNVS), 225 to 245 (IYIS…LAAA), and 249 to 269 (AWVI…LVMI). Positions 315–319 (HVAHH) match the Histidine box-3 motif.

Belongs to the fatty acid desaturase type 1 family. As to expression, expressed in leaves and seeds.

The protein localises to the endoplasmic reticulum membrane. The catalysed reaction is (9Z)-octadecenoyl-CoA + 2 Fe(II)-[cytochrome b5] + O2 + 2 H(+) = (9Z,12Z)-octadecadienoyl-CoA + 2 Fe(III)-[cytochrome b5] + 2 H2O. It catalyses the reaction (9Z)-hexadecenoyl-CoA + 2 Fe(II)-[cytochrome b5] + O2 + 2 H(+) = (9Z,12Z)-hexadecadienoyl-CoA + 2 Fe(III)-[cytochrome b5] + 2 H2O. Its pathway is lipid metabolism; polyunsaturated fatty acid biosynthesis. Catalyzes the desaturation of oleic acid (18:1(9Z)) to linoleic acid (18:2(9Z,12Z)). This is Delta(12)-fatty-acid desaturase FAD2 from Vernicia fordii (Tung).